The sequence spans 344 residues: Enoyl-[acyl-carrier-protein] reductase, mitochondrial (344 aa).

The N-terminal 14 residues, 1-14 (MLKVLSLRSALQRA), are a transit peptide targeting the mitochondrion. Y69 functions as the Proton donor in the catalytic mechanism. NADP(+) is bound by residues N142, 168–171 (NSAV), 191–193 (RSR), 255–258 (YGGM), 280–282 (FWM), and K338.

The protein belongs to the zinc-containing alcohol dehydrogenase family. Quinone oxidoreductase subfamily. Homodimer.

It is found in the mitochondrion. It carries out the reaction a 2,3-saturated acyl-[ACP] + NADP(+) = a (2E)-enoyl-[ACP] + NADPH + H(+). In terms of biological role, catalyzes the NADPH-dependent reduction of trans-2-enoyl thioesters in mitochondrial fatty acid synthesis (fatty acid synthesis type II). Fatty acid chain elongation in mitochondria uses acyl carrier protein (ACP) as an acyl group carrier, but the enzyme accepts both ACP and CoA thioesters as substrates in vitro. May provide the octanoyl chain used for lipoic acid biosynthesis, regulating protein lipoylation and mitochondrial respiratory activity. Involved in iron homeostasis; affecting Fe-S cluster assembly and ceramide metabolism. Required for proper morphology and bioenergetic functions of mitochondria. Required for maintenance of neurons. The sequence is that of Enoyl-[acyl-carrier-protein] reductase, mitochondrial from Caenorhabditis elegans.